A 253-amino-acid chain; its full sequence is Ribosome-inactivating protein saporin-5 (253 aa).

Glutamate 176 is an active-site residue.

It belongs to the ribosome-inactivating protein family. Type 1 RIP subfamily.

The catalysed reaction is Endohydrolysis of the N-glycosidic bond at one specific adenosine on the 28S rRNA.. Ribosome-inactivating protein of type 1, inhibits protein synthesis in animal cells. The sequence is that of Ribosome-inactivating protein saporin-5 (SAP5) from Saponaria officinalis (Common soapwort).